We begin with the raw amino-acid sequence, 195 residues long: Probable DNA-directed RNA polymerase subunit delta (195 aa).

The HTH HARE-type domain maps to 14–83 (LSMIEVARAI…GDNKWGLRSW (70 aa)). Acidic residues-rich tracts occupy residues 119–138 (GDED…DSYE) and 145–195 (YDDE…GEEE). The interval 119–195 (GDEDAIDYSD…SDDDAEGEEE (77 aa)) is disordered.

This sequence belongs to the RpoE family. As to quaternary structure, RNAP is composed of a core of 2 alpha, a beta and a beta' subunits. The core is associated with a delta subunit and one of several sigma factors.

Its function is as follows. Participates in both the initiation and recycling phases of transcription. In the presence of the delta subunit, RNAP displays an increased specificity of transcription, a decreased affinity for nucleic acids, and an increased efficiency of RNA synthesis because of enhanced recycling. This chain is Probable DNA-directed RNA polymerase subunit delta, found in Streptococcus gordonii (strain Challis / ATCC 35105 / BCRC 15272 / CH1 / DL1 / V288).